Here is a 474-residue protein sequence, read N- to C-terminus: MVQGCTSNAGKSYLCAALCRMLSDEGLRVAPFKAQNMSNNAGVTPPESSAPGLEMGRAQLVQARAARVVPDVRMNPVLLKPEADTSSQVVLLGRAAPELTALPWRERKPRLWPFVKGALHSLLDEFDVVVIEGAGSPAEVNLRPSDIVNMRVAREARAAVLLAADIDRGGAFAHLLGTWHCLMPEERALMRGFILNRFRGDASLLAPAPEWLEEQTGVPTLGVVPWLNVALPEEDGVAVEAPAAIIPSPSTGFVAIPRLPRVSNLDEFAPLGELARWVTSPQELAGARAVILPGSKSTAADLAWLRATGLAGAVTRLAVQGVPVLGICGGLQMLGQTLSDPQGVEGGSAASGGKVYGLGLLDLHTAFAADKTTRLSEVRDPETGLRLQGYEIHHGQTRSGPGVQTLVPGLLWRSGNVRGTYLHGLLENSAYLEHFLRWADLPVPACLDSLDARLDAIAAQVQAGLSWDRVRALL.

A GATase cobBQ-type domain is found at 251-431 (TGFVAIPRLP…LHGLLENSAY (181 aa)). Cys-328 functions as the Nucleophile in the catalytic mechanism. Residue His-423 is part of the active site.

Belongs to the CobB/CobQ family. CobQ subfamily.

It functions in the pathway cofactor biosynthesis; adenosylcobalamin biosynthesis. Its function is as follows. Catalyzes amidations at positions B, D, E, and G on adenosylcobyrinic A,C-diamide. NH(2) groups are provided by glutamine, and one molecule of ATP is hydrogenolyzed for each amidation. This chain is Cobyric acid synthase, found in Deinococcus radiodurans (strain ATCC 13939 / DSM 20539 / JCM 16871 / CCUG 27074 / LMG 4051 / NBRC 15346 / NCIMB 9279 / VKM B-1422 / R1).